We begin with the raw amino-acid sequence, 260 residues long: 14-3-3 protein 3 (260 aa).

Belongs to the 14-3-3 family. In terms of assembly, homodimer.

The protein is 14-3-3 protein 3 (TFT3) of Solanum lycopersicum (Tomato).